A 408-amino-acid chain; its full sequence is Peptidase T (408 aa).

His78 lines the Zn(2+) pocket. Asp80 is an active-site residue. A Zn(2+)-binding site is contributed by Asp141. Glu175 serves as the catalytic Proton acceptor. Zn(2+) contacts are provided by Glu176, Asp198, and His380.

This sequence belongs to the peptidase M20B family. Zn(2+) serves as cofactor.

The protein localises to the cytoplasm. The enzyme catalyses Release of the N-terminal residue from a tripeptide.. Cleaves the N-terminal amino acid of tripeptides. In Clostridium botulinum (strain Kyoto / Type A2), this protein is Peptidase T.